A 276-amino-acid chain; its full sequence is NADPH-dependent 7-cyano-7-deazaguanine reductase (276 aa).

Substrate is bound at residue 83–85; sequence IES. 85–86 serves as a coordination point for NADPH; the sequence is SK. The active-site Thioimide intermediate is C184. The active-site Proton donor is D191. 223 to 224 contributes to the substrate binding site; sequence HE. Residue 252-253 participates in NADPH binding; the sequence is RG.

Belongs to the GTP cyclohydrolase I family. QueF type 2 subfamily. Homodimer.

The protein localises to the cytoplasm. The catalysed reaction is 7-aminomethyl-7-carbaguanine + 2 NADP(+) = 7-cyano-7-deazaguanine + 2 NADPH + 3 H(+). It participates in tRNA modification; tRNA-queuosine biosynthesis. Its function is as follows. Catalyzes the NADPH-dependent reduction of 7-cyano-7-deazaguanine (preQ0) to 7-aminomethyl-7-deazaguanine (preQ1). The protein is NADPH-dependent 7-cyano-7-deazaguanine reductase of Pseudomonas fluorescens (strain ATCC BAA-477 / NRRL B-23932 / Pf-5).